The chain runs to 260 residues: Adenosylcobinamide-GDP ribazoletransferase (260 aa).

6 consecutive transmembrane segments (helical) span residues 7–27 (WYFL…TRLP), 45–65 (LMGL…HWLG), 117–137 (AYGV…LASF), 145–165 (WALI…IALY), 187–207 (LLLG…ALAI), and 210–230 (WLIL…GRWF).

It belongs to the CobS family. Mg(2+) serves as cofactor.

The protein localises to the cell inner membrane. The enzyme catalyses alpha-ribazole + adenosylcob(III)inamide-GDP = adenosylcob(III)alamin + GMP + H(+). It catalyses the reaction alpha-ribazole 5'-phosphate + adenosylcob(III)inamide-GDP = adenosylcob(III)alamin 5'-phosphate + GMP + H(+). Its pathway is cofactor biosynthesis; adenosylcobalamin biosynthesis; adenosylcobalamin from cob(II)yrinate a,c-diamide: step 7/7. Joins adenosylcobinamide-GDP and alpha-ribazole to generate adenosylcobalamin (Ado-cobalamin). Also synthesizes adenosylcobalamin 5'-phosphate from adenosylcobinamide-GDP and alpha-ribazole 5'-phosphate. This chain is Adenosylcobinamide-GDP ribazoletransferase, found in Synechocystis sp. (strain ATCC 27184 / PCC 6803 / Kazusa).